The chain runs to 398 residues: MAGSKWETEETNQFAIENQKLEEEWRKKRRLEKKRKRKILEEEEKAEERNIDACRLYLMGNTPELKSCNSIDDYEILEKIEEGSYGIVYRGLDKSTNTLVALKKIKFDPNGIGFPITSLREIESLSSIRHDNIVELEKVVVGKDLKDVYLVMEFMEHDLKTLLDNMPEDFLQSEVKTLMLQLLAATAFMHHHWYLHRDLKPSNLLMNNTGEIKLADFGLARPVSEPKSSLTRLVVTLWYRAPELLLGAPSYGKEIDMWSIGCIFAEMITRTPLFSGKSELDQLYKIFNLLGYPTREEWPQYFLLPYANKIKHPTVPTHSKIRTSIPNLTGNAYDLLNRLLSLNPAKRISAKEALEHPYFYESPRPKDPKFFPTFPSKAKGESKEKNVFQSFRSASPKK.

A Protein kinase domain is found at 74–359 (YEILEKIEEG…AKEALEHPYF (286 aa)). ATP-binding positions include 80–88 (IEEGSYGIV) and Lys103. Asp198 functions as the Proton acceptor in the catalytic mechanism. Residues 359-398 (FYESPRPKDPKFFPTFPSKAKGESKEKNVFQSFRSASPKK) are disordered. Polar residues predominate over residues 387-398 (VFQSFRSASPKK).

It belongs to the protein kinase superfamily. Ser/Thr protein kinase family.

It localises to the nucleus. The catalysed reaction is L-seryl-[protein] + ATP = O-phospho-L-seryl-[protein] + ADP + H(+). It catalyses the reaction L-threonyl-[protein] + ATP = O-phospho-L-threonyl-[protein] + ADP + H(+). The sequence is that of Serine/threonine-protein kinase ppk23 (ppk23) from Schizosaccharomyces pombe (strain 972 / ATCC 24843) (Fission yeast).